The primary structure comprises 597 residues: Probable translation initiation factor IF-2 (597 aa).

In terms of domain architecture, tr-type G spans 10 to 226 (LRTPIVAVLG…LMGLSQRFMK (217 aa)). The segment at 19–26 (GHVDHGKT) is G1. 19-26 (GHVDHGKT) lines the GTP pocket. Residues 44-48 (AITQH) form a G2 region. Residues 81 to 84 (DTPG) are G3. Residues 81 to 85 (DTPGH) and 135 to 138 (NKVD) contribute to the GTP site. The G4 stretch occupies residues 135–138 (NKVD). Positions 203–205 (SAI) are G5.

This sequence belongs to the TRAFAC class translation factor GTPase superfamily. Classic translation factor GTPase family. IF-2 subfamily.

Its function is as follows. Function in general translation initiation by promoting the binding of the formylmethionine-tRNA to ribosomes. Seems to function along with eIF-2. The polypeptide is Probable translation initiation factor IF-2 (Halorubrum lacusprofundi (strain ATCC 49239 / DSM 5036 / JCM 8891 / ACAM 34)).